A 224-amino-acid chain; its full sequence is Triosephosphate isomerase (224 aa).

9-11 (NFK) contacts substrate. The Electrophile role is filled by H93. The active-site Proton acceptor is E141. Residues I146, G181, and 202–203 (AS) contribute to the substrate site.

Belongs to the triosephosphate isomerase family. As to quaternary structure, homotetramer; dimer of dimers.

Its subcellular location is the cytoplasm. The enzyme catalyses D-glyceraldehyde 3-phosphate = dihydroxyacetone phosphate. It functions in the pathway carbohydrate biosynthesis; gluconeogenesis. The protein operates within carbohydrate degradation; glycolysis; D-glyceraldehyde 3-phosphate from glycerone phosphate: step 1/1. In terms of biological role, involved in the gluconeogenesis. Catalyzes stereospecifically the conversion of dihydroxyacetone phosphate (DHAP) to D-glyceraldehyde-3-phosphate (G3P). The chain is Triosephosphate isomerase from Pyrobaculum arsenaticum (strain DSM 13514 / JCM 11321 / PZ6).